Consider the following 554-residue polypeptide: DnaJ homolog subfamily C member 1 (554 aa).

An N-terminal signal peptide occupies residues 1-47 (MTAPCSQPAQLPGRRQLGLVPFPPPPPRTPLLWLLLLLLAAVAPARG). Over 48-153 (WESGDLELFD…RRVRKMSNAE (106 aa)) the chain is Lumenal. In terms of domain architecture, J spans 65–129 (NFYQFLGVQQ…ERRQRYDDIL (65 aa)). A helical transmembrane segment spans residues 154–174 (LALLLFIILTVGHYAVVWSIY). Residues 175–554 (LEKQLDELLS…LVQKKKQAKS (380 aa)) lie on the Cytoplasmic side of the membrane. An SANT 1 domain is found at 325 to 379 (KQAPEWTEEDLSQLTRSMVKFPGGTPGRWEKIAHELGRSVTDVTTKAKQLKDSVT). Phosphoserine is present on Ser381. A compositionally biased stretch (polar residues) spans 392–405 (STVQNSRPIKTATT). The disordered stretch occupies residues 392-500 (STVQNSRPIK…RSAEEPWTQN (109 aa)). The segment covering 421-432 (AAEEEQEGDSGE) has biased composition (acidic residues). The residue at position 430 (Ser430) is a Phosphoserine. A compositionally biased stretch (basic and acidic residues) spans 455–472 (AKPEPEEKSRAKRQKDFD). The span at 473–482 (IAEQNESSDE) shows a compositional bias: acidic residues. Ser479, Ser480, Ser484, and Ser492 each carry phosphoserine. The span at 483–494 (ESLRKERARSAE) shows a compositional bias: basic and acidic residues. The 56-residue stretch at 492–547 (SAEEPWTQNQQKLLELALQQYPRGSSDRWDKIARCVPSKSKEDCIARYKLLVELVQ) folds into the SANT 2 domain.

In terms of assembly, interacts (via J domain) with HSPA5. Interacts (via cytosolic domain) with ribosomes. Interacts (via SANT 2 domain) with SERPINA3; the interaction delays the formation of the covalent inhibitory complex SERPINA3-chymotrypsin, but does not alter the catalytic activity of SERPINA3. Interacts (via SANT 2 domain) with ITIH4 (via C-terminus); the interaction protects ITIH4 against in vitro cleavage by kallikrein.

Its subcellular location is the endoplasmic reticulum membrane. The protein localises to the nucleus membrane. It is found in the microsome membrane. Its function is as follows. May modulate protein synthesis. The chain is DnaJ homolog subfamily C member 1 (DNAJC1) from Homo sapiens (Human).